Reading from the N-terminus, the 934-residue chain is Diacylglycerol kinase theta (934 aa).

The interval 1-50 (MAAAAEPGARTWPGSGSPRLGSPAGSPVLGISGRTRPGSGPERTSRAIGS) is disordered. A phosphoserine mark is found at serine 22 and serine 26. Phorbol-ester/DAG-type zinc fingers lie at residues 54-102 (GHSF…KTPC), 115-162 (AHCF…CSDC), and 177-228 (HHHW…APEC). A Ras-associating domain is found at 387–486 (TQEILKIYPG…TRFYVAETRA (100 aa)). Short sequence motifs (LXXLL motif) lie at residues 547-551 (LYMLA) and 566-570 (LPDVL). Positions 576-713 (PDCCPLLVFV…MDRWTILLDA (138 aa)) constitute a DAGKc domain. Residues 905–916 (LRKAKQKPRKAG) show a composition bias toward basic residues. The interval 905–934 (LRKAKQKPRKAGANRDTRVDTLPAPEGNPL) is disordered.

It belongs to the eukaryotic diacylglycerol kinase family. In terms of assembly, interacts with RHOA (constitutively activated, GTP-bound); the interaction inhibits DGKQ. Interacts with PRKCE. Interacts with PRKCH. Interacts with PLCB1. Interacts with NR5A1; the interaction requires both LXXLL motifs in DGKQ and is required for full phosphatidic acid-mediated activation of NR5A1. In terms of processing, phosphorylated by PRKCE and PRKCH in vitro. As to expression, widely expressed in all brain regions, including the cortex and hippocampus with a specific expression in neuronal cells (at protein level).

The protein localises to the cytoplasm. It is found in the cytosol. It localises to the cell membrane. The protein resides in the synapse. Its subcellular location is the cytoskeleton. The protein localises to the nucleus. It is found in the nucleus speckle. It localises to the nucleus matrix. It carries out the reaction a 1,2-diacyl-sn-glycerol + ATP = a 1,2-diacyl-sn-glycero-3-phosphate + ADP + H(+). The enzyme catalyses a 1-O-alkyl-sn-glycerol + ATP = a 1-O-alkyl-sn-glycero-3-phosphate + ADP + H(+). The catalysed reaction is 1-O-alkyl-2-acyl-sn-glycerol + ATP = 1-O-alkyl-2-acyl-sn-glycero-3-phosphate + ADP + H(+). It catalyses the reaction 1,2-di-(9Z-octadecenoyl)-sn-glycerol + ATP = 1,2-di-(9Z-octadecenoyl)-sn-glycero-3-phosphate + ADP + H(+). It carries out the reaction 1-O-hexadecyl-sn-glycerol + ATP = 1-O-hexadecyl-sn-glycero-3-phosphate + ADP + H(+). The enzyme catalyses 1-O-hexadecyl-2-acetyl-sn-glycerol + ATP = 1-O-hexadecyl-2-acetyl-sn-glycero-3-phosphate + ADP + H(+). The catalysed reaction is 1-octadecanoyl-2-(5Z,8Z,11Z,14Z-eicosatetraenoyl)-sn-glycerol + ATP = 1-octadecanoyl-2-(5Z,8Z,11Z,14Z-eicosatetraenoyl)-sn-glycero-3-phosphate + ADP + H(+). It participates in lipid metabolism; glycerolipid metabolism. With respect to regulation, activated by phosphatidylserine. Its function is as follows. Diacylglycerol kinase that converts diacylglycerol/DAG into phosphatidic acid/phosphatidate/PA and regulates the respective levels of these two bioactive lipids. Thereby, acts as a central switch between the signaling pathways activated by these second messengers with different cellular targets and opposite effects in numerous biological processes. Within the adrenocorticotropic hormone signaling pathway, produces phosphatidic acid which in turn activates NR5A1 and subsequent steroidogenic gene transcription. Also functions downstream of the nerve growth factor signaling pathway being specifically activated in the nucleus by the growth factor. Through its diacylglycerol activity also regulates synaptic vesicle endocytosis. The protein is Diacylglycerol kinase theta (Dgkq) of Mus musculus (Mouse).